The following is a 277-amino-acid chain: Eukaryotic translation initiation factor 3 subunit J (277 aa).

Positions 1–80 (MSWDDEDFAV…PAATKNTMLD (80 aa)) are disordered. Residues 23-43 (WDDEFAENDDEPVLESWEDEE) are compositionally biased toward acidic residues. Residues 50-75 (KAAAAAAAKAPKKASPSPAATPAATK) are compositionally biased toward low complexity. A coiled-coil region spans residues 199–230 (TVENIRQTIATLNVLMKDKEREERQARLAKVK). The segment at 257–277 (DNDFDLGGNDNFDDFGEDDFM) is disordered. Over residues 267 to 277 (NFDDFGEDDFM) the composition is skewed to acidic residues.

It belongs to the eIF-3 subunit J family. As to quaternary structure, component of the eukaryotic translation initiation factor 3 (eIF-3) complex.

It is found in the cytoplasm. In terms of biological role, component of the eukaryotic translation initiation factor 3 (eIF-3) complex, which is involved in protein synthesis of a specialized repertoire of mRNAs and, together with other initiation factors, stimulates binding of mRNA and methionyl-tRNAi to the 40S ribosome. The eIF-3 complex specifically targets and initiates translation of a subset of mRNAs involved in cell proliferation. This Kluyveromyces lactis (strain ATCC 8585 / CBS 2359 / DSM 70799 / NBRC 1267 / NRRL Y-1140 / WM37) (Yeast) protein is Eukaryotic translation initiation factor 3 subunit J.